Here is a 124-residue protein sequence, read N- to C-terminus: MPTIQQLIRTERSRLKAKTKSPALKSCPERRGVCTRVYTSTPKKPNSALRKVARVRLTSGFEVTAYIGGVGHNLQEHSVVLIRGGRVKDLPGVRYHIIRGTLDTAGVKDRRQSRSKYGAKTPKE.

A 3-methylthioaspartic acid modification is found at Asp-89. The disordered stretch occupies residues 104 to 124 (TAGVKDRRQSRSKYGAKTPKE).

Belongs to the universal ribosomal protein uS12 family. In terms of assembly, part of the 30S ribosomal subunit. Contacts proteins S8 and S17. May interact with IF1 in the 30S initiation complex.

With S4 and S5 plays an important role in translational accuracy. In terms of biological role, interacts with and stabilizes bases of the 16S rRNA that are involved in tRNA selection in the A site and with the mRNA backbone. Located at the interface of the 30S and 50S subunits, it traverses the body of the 30S subunit contacting proteins on the other side and probably holding the rRNA structure together. The combined cluster of proteins S8, S12 and S17 appears to hold together the shoulder and platform of the 30S subunit. The polypeptide is Small ribosomal subunit protein uS12 (Parasynechococcus marenigrum (strain WH8102)).